A 264-amino-acid polypeptide reads, in one-letter code: Apolipoprotein A-I (264 aa).

The first 18 residues, 1–18 (MKAVVLAVAVLFLTGSQA), serve as a signal peptide directing secretion. 2 repeat units span residues 67 to 88 (LKLL…ADLG) and 89 to 110 (PVTQ…QEMN). Positions 67–264 (LKLLDNWDTL…DQATKQLTAQ (198 aa)) are 10 X approximate tandem repeats. Methionine sulfoxide is present on Met109. The stretch at 111–121 (KDLQEVKQKVQ) is one 3; half-length repeat. Tandem repeats lie at residues 122 to 143 (PYLD…EKVG), 144 to 165 (PLGT…EKLT), 166 to 187 (PLGE…TQLA), 188 to 207 (PYSD…LRDS), and 208 to 229 (TTFA…EKAK). The stretch at 230–240 (PALEDLRQGLL) is one 9; half-length repeat. The stretch at 241-264 (PVLESLKASILSSIDQATKQLTAQ) is repeat 10.

It belongs to the apolipoprotein A1/A4/E family. In terms of assembly, homodimer. Interacts with APOA1BP and CLU. Component of a sperm activating protein complex (SPAP), consisting of APOA1, an immunoglobulin heavy chain, an immunoglobulin light chain and albumin. Interacts with NDRG1. Interacts with SCGB3A2. Interacts with NAXE and YJEFN3. Post-translationally, glycosylated. In terms of processing, palmitoylated. Phosphorylation sites are present in the extracellular medium.

The protein localises to the secreted. Its function is as follows. Participates in the reverse transport of cholesterol from tissues to the liver for excretion by promoting cholesterol efflux from tissues and by acting as a cofactor for the lecithin cholesterol acyltransferase (LCAT). As part of the SPAP complex, activates spermatozoa motility. This chain is Apolipoprotein A-I (APOA1), found in Chinchilla lanigera (Long-tailed chinchilla).